Here is a 589-residue protein sequence, read N- to C-terminus: EZH inhibitory protein (589 aa).

Disordered regions lie at residues 1-46, 61-548, and 561-589; these read MASS…LRLR, AGED…SGPN, and LDSS…KCRG. Gly residues-rich tracts occupy residues 29 to 38 and 105 to 114; these read GPRGRGGPSG and PKGGGKADQG. Positions 147 to 161 are enriched in low complexity; it reads GAAGPPLPGARGSPA. The segment covering 193–204 has biased composition (polar residues); it reads LRSSTSQGSGST. Low complexity-rich tracts occupy residues 299–308, 325–334, 351–360, and 374–390; these read RSSASAVSPE, RSSASVVSPE, and PRAT…TTRS. Ser306 is modified (phosphoserine). Positions 426-437 are enriched in basic and acidic residues; sequence MRLDLQVDREPE. Acidic residues predominate over residues 438–449; sequence SEAEQEEQELES. Positions 450-465 are enriched in low complexity; it reads EPGPSSRPQASRSSSR. The tract at residues 482–490 is sufficient for interaction with EZH2; that stretch reads RRPVRMRAS. Residues 484–503 form a necessary and sufficient for inhibition of PRC2/EED-EZH1 and PRC2/EED-EZH2 complex activity region; sequence PVRMRASSPSPPGRLYPLPK. Low complexity predominate over residues 509-547; the sequence is VHSPSSSSSESSSVSSSHSPLNKAPDPGSSPPLSSLSGP. Residues 575–589 show a composition bias toward basic and acidic residues; the sequence is AAPHTREEEDKKCRG.

As to quaternary structure, interacts with PRC2/EED-EZH1 complex member EZH1 and with PRC2/EED-EZH2 complex member EZH2; the interaction blocks EZH1/EZH2 methyltransferase activity. Interacts (via C-terminus) with SUZ12 which is a member of the PRC2/EED-EZH1 and PRC2/EED-EZH2 complexes. As to expression, highly expressed in ovary with lower expression in testis and very low levels in other tissues tested including prostate, brain, kidney, spleen and liver. During spermatogenesis, expressed mainly in spermatogonia with very low expression in spermatocytes I and II.

The protein localises to the nucleus. It localises to the cytoplasm. Functionally, inhibits PRC2/EED-EZH1 and PRC2/EED-EZH2 complex function by inhibiting EZH1/EZH2 methyltransferase activity, thereby causing down-regulation of histone H3 trimethylation at 'Lys-27' (H3K27me3). Probably inhibits methyltransferase activity by limiting the stimulatory effect of cofactors such as AEBP2 and JARID2. Inhibits H3K27me3 deposition during spermatogenesis and oogenesis. The protein is EZH inhibitory protein of Mus musculus (Mouse).